Here is a 433-residue protein sequence, read N- to C-terminus: Glutamyl-tRNA reductase (433 aa).

Substrate is bound by residues 49–52, Ser-109, 114–116, and Gln-120; these read TCNR and EGQ. Cys-50 acts as the Nucleophile in catalysis. An NADP(+)-binding site is contributed by 198-203; that stretch reads GAGRMS.

Belongs to the glutamyl-tRNA reductase family. Homodimer.

The enzyme catalyses (S)-4-amino-5-oxopentanoate + tRNA(Glu) + NADP(+) = L-glutamyl-tRNA(Glu) + NADPH + H(+). It participates in porphyrin-containing compound metabolism; protoporphyrin-IX biosynthesis; 5-aminolevulinate from L-glutamyl-tRNA(Glu): step 1/2. The protein operates within porphyrin-containing compound metabolism; chlorophyll biosynthesis. Functionally, catalyzes the NADPH-dependent reduction of glutamyl-tRNA(Glu) to glutamate 1-semialdehyde (GSA). The chain is Glutamyl-tRNA reductase from Prochlorococcus marinus subsp. pastoris (strain CCMP1986 / NIES-2087 / MED4).